Reading from the N-terminus, the 324-residue chain is Beta-ketoacyl-[acyl-carrier-protein] synthase III (324 aa).

Active-site residues include Cys111 and His251. Positions 252-256 (QANTR) are ACP-binding. The active site involves Asn281.

Belongs to the thiolase-like superfamily. FabH family. Homodimer.

It is found in the plastid. The protein resides in the chloroplast. It catalyses the reaction malonyl-[ACP] + acetyl-CoA + H(+) = 3-oxobutanoyl-[ACP] + CO2 + CoA. It participates in lipid metabolism; fatty acid biosynthesis. Functionally, catalyzes the condensation reaction of fatty acid synthesis by the addition to an acyl acceptor of two carbons from malonyl-ACP. Catalyzes the first condensation reaction which initiates fatty acid synthesis and may therefore play a role in governing the total rate of fatty acid production. Possesses both acetoacetyl-ACP synthase and acetyl transacylase activities. Its substrate specificity determines the biosynthesis of branched-chain and/or straight-chain of fatty acids. The protein is Beta-ketoacyl-[acyl-carrier-protein] synthase III of Pyropia yezoensis (Susabi-nori).